Reading from the N-terminus, the 394-residue chain is Elongation factor Tu (394 aa).

Residues 10 to 204 enclose the tr-type G domain; that stretch reads KPHINIGTIG…AVDDNIPTPE (195 aa). Positions 19–26 are G1; sequence GHVDHGKT. 19 to 26 lines the GTP pocket; sequence GHVDHGKT. Position 26 (T26) interacts with Mg(2+). The tract at residues 60-64 is G2; the sequence is GITIN. Residues 81 to 84 are G3; the sequence is DCPG. GTP-binding positions include 81 to 85 and 136 to 139; these read DCPGH and NKID. Residues 136-139 are G4; the sequence is NKID. The tract at residues 174 to 176 is G5; it reads SAL.

The protein belongs to the TRAFAC class translation factor GTPase superfamily. Classic translation factor GTPase family. EF-Tu/EF-1A subfamily. In terms of assembly, monomer.

The protein localises to the cytoplasm. The enzyme catalyses GTP + H2O = GDP + phosphate + H(+). Its function is as follows. GTP hydrolase that promotes the GTP-dependent binding of aminoacyl-tRNA to the A-site of ribosomes during protein biosynthesis. The polypeptide is Elongation factor Tu (Chlamydia trachomatis serovar L2 (strain ATCC VR-902B / DSM 19102 / 434/Bu)).